A 303-amino-acid chain; its full sequence is Sulfotransferase 6B1 (303 aa).

65–70 provides a ligand contact to 3'-phosphoadenylyl sulfate; the sequence is KCGSNW. The Proton acceptor role is filled by His118. Residues Arg140, Ser148, Tyr203, 237 to 242, and 259 to 261 contribute to the 3'-phosphoadenylyl sulfate site; these read STFQAM and RKG.

Belongs to the sulfotransferase 1 family. Specifically expressed in kidney and testis.

It is found in the cytoplasm. The protein localises to the cytosol. It catalyses the reaction thyroxine + 3'-phosphoadenylyl sulfate = thyroxine sulfate + adenosine 3',5'-bisphosphate + H(+). Its function is as follows. Sulfotransferase that utilizes 3'-phospho-5'-adenylyl sulfate (PAPS) as sulfonate donor to catalyze the sulfate conjugation of thyroxine. Involved in the metabolism of thyroxine. The sequence is that of Sulfotransferase 6B1 (SULT6B1) from Homo sapiens (Human).